A 344-amino-acid chain; its full sequence is Aurora kinase B (344 aa).

A disordered region spans residues 1-22 (MAQKENSYPWPYGRQTAPSGLS). Residue threonine 35 is modified to Phosphothreonine. A Phosphoserine modification is found at serine 62. Phosphothreonine is present on threonine 64. Residues 77-327 (FEIGRPLGKG…LAQVSAHPWV (251 aa)) form the Protein kinase domain. Residues 83–91 (LGKGKFGNV) and lysine 106 each bind ATP. Aspartate 200 functions as the Proton acceptor in the catalytic mechanism. An N6-acetyllysine modification is found at lysine 215. The residue at position 227 (serine 227) is a Phosphoserine. Threonine 232 bears the Phosphothreonine; by autocatalysis mark.

Belongs to the protein kinase superfamily. Ser/Thr protein kinase family. Aurora subfamily. Component of the chromosomal passenger complex (CPC) composed of at least BIRC5/survivin, CDCA8/borealin, INCENP, AURKB or AURKC; predominantly independent AURKB- and AURKC-containing complexes exist. Associates with RACGAP1 during M phase. Interacts with SPDYC; this interaction may be required for proper localization of active, Thr-232-phosphorylated AURKB form during prometaphase and metaphase. Interacts with p53/TP53. Interacts (via the middle kinase domain) with NOC2L (via the N- and C-terminus domains). Interacts with CDCA1. Interacts with EVI5. Interacts with JTB. Interacts with NDC80. Interacts with PSMA3. Interacts with RNF2/RING1B. Interacts with SEPTIN1. Interacts with SIRT2. Interacts with TACC1. Interacts with TTC28. The phosphorylation of Thr-232 requires the binding to INCENP and occurs by means of an autophosphorylation mechanism. Thr-232 phosphorylation is indispensable for the AURKB kinase activity. Post-translationally, acetylated at Lys-215 by KAT5 at kinetochores, increasing AURKB activity and promoting accurate chromosome segregation in mitosis. In terms of processing, ubiquitinated by different BCR (BTB-CUL3-RBX1) E3 ubiquitin ligase complexes. Ubiquitinated by the BCR(KLHL9-KLHL13) E3 ubiquitin ligase complex, ubiquitination leads to removal from mitotic chromosomes and is required for cytokinesis. During anaphase, the BCR(KLHL21) E3 ubiquitin ligase complex recruits the CPC complex from chromosomes to the spindle midzone and mediates the ubiquitination of AURKB. Ubiquitination of AURKB by BCR(KLHL21) E3 ubiquitin ligase complex may not lead to its degradation by the proteasome. Deubiquitinated by USP35; inhibiting CDH1-mediated degradation of AURKB. As to expression, high level expression seen in the thymus. It is also expressed in the spleen, lung, testis, colon, placenta and fetal liver. Expressed during S and G2/M phase and expression is up-regulated in cancer cells during M phase. In terms of tissue distribution, not expressed in normal liver, high expression in metastatic liver.

It is found in the nucleus. It localises to the chromosome. The protein resides in the centromere. The protein localises to the kinetochore. Its subcellular location is the cytoplasm. It is found in the cytoskeleton. It localises to the spindle. The protein resides in the midbody. The catalysed reaction is L-seryl-[protein] + ATP = O-phospho-L-seryl-[protein] + ADP + H(+). The enzyme catalyses L-threonyl-[protein] + ATP = O-phospho-L-threonyl-[protein] + ADP + H(+). With respect to regulation, activity is greatly increased when AURKB is within the CPC complex. In particular, AURKB-phosphorylated INCENP acts as an activator of AURKB. Positive feedback between HASPIN and AURKB contributes to CPC localization. Inhibited by ZM447439. Serine/threonine-protein kinase component of the chromosomal passenger complex (CPC), a complex that acts as a key regulator of mitosis. The CPC complex has essential functions at the centromere in ensuring correct chromosome alignment and segregation and is required for chromatin-induced microtubule stabilization and spindle assembly. Involved in the bipolar attachment of spindle microtubules to kinetochores and is a key regulator for the onset of cytokinesis during mitosis. Required for central/midzone spindle assembly and cleavage furrow formation. Key component of the cytokinesis checkpoint, a process required to delay abscission to prevent both premature resolution of intercellular chromosome bridges and accumulation of DNA damage: phosphorylates CHMP4C, leading to retain abscission-competent VPS4 (VPS4A and/or VPS4B) at the midbody ring until abscission checkpoint signaling is terminated at late cytokinesis. AURKB phosphorylates the CPC complex subunits BIRC5/survivin, CDCA8/borealin and INCENP. Phosphorylation of INCENP leads to increased AURKB activity. Other known AURKB substrates involved in centromeric functions and mitosis are CENPA, DES/desmin, GPAF, KIF2C, NSUN2, RACGAP1, SEPTIN1, VIM/vimentin, HASPIN, and histone H3. A positive feedback loop involving HASPIN and AURKB contributes to localization of CPC to centromeres. Phosphorylation of VIM controls vimentin filament segregation in cytokinetic process, whereas histone H3 is phosphorylated at 'Ser-10' and 'Ser-28' during mitosis (H3S10ph and H3S28ph, respectively). AURKB is also required for kinetochore localization of BUB1 and SGO1. Phosphorylation of p53/TP53 negatively regulates its transcriptional activity. Key regulator of active promoters in resting B- and T-lymphocytes: acts by mediating phosphorylation of H3S28ph at active promoters in resting B-cells, inhibiting RNF2/RING1B-mediated ubiquitination of histone H2A and enhancing binding and activity of the USP16 deubiquitinase at transcribed genes. Acts as an inhibitor of CGAS during mitosis: catalyzes phosphorylation of the N-terminus of CGAS during the G2-M transition, blocking CGAS liquid phase separation and activation, and thereby preventing CGAS-induced autoimmunity. Phosphorylates KRT5 during anaphase and telophase. Phosphorylates ATXN10 which promotes phosphorylation of ATXN10 by PLK1 and may play a role in the regulation of cytokinesis and stimulating the proteasomal degradation of ATXN10. The sequence is that of Aurora kinase B (AURKB) from Homo sapiens (Human).